The following is a 297-amino-acid chain: HTH-type transcriptional regulator ArgP (297 aa).

Residues 4–60 (PDYRTLQALDAVIRERGFERAAQKLCITQSAVSQRIKQLENLFGQPLLVRTVPPRPT) form the HTH lysR-type domain. The segment at residues 21–40 (FERAAQKLCITQSAVSQRIK) is a DNA-binding region (H-T-H motif).

The protein belongs to the LysR transcriptional regulatory family. As to quaternary structure, homodimer.

Functionally, controls the transcription of genes involved in arginine and lysine metabolism. In Yersinia enterocolitica serotype O:8 / biotype 1B (strain NCTC 13174 / 8081), this protein is HTH-type transcriptional regulator ArgP.